Consider the following 246-residue polypeptide: MKYDIIGDIHGCLQEFQNLTEKLGYNWSSGLPVHPDQRKLAFVGDITDRGPHSLRMIEIVWELVIHKKVAYYAPGNHCNKLYRFFLGRNVTVAHGLETTVAEYEALPSHKQNMIKEKFITLYEQSPLYHVLDEKRLLVCHAGIRQDYIGRQDKKVQTFVLYGDITGEKHADGSPVRRDWAKEYKGTTWIVYGHTPVKEPRFVNHTVNIDTGAVFGGRLTALRYPEMETVSVPSSLPFVPEKFRPIS.

It belongs to the PrpE family. It depends on Ni(2+) as a cofactor.

The enzyme catalyses P(1),P(4)-bis(5'-guanosyl) tetraphosphate + H2O = GMP + GTP + 2 H(+). Asymmetrically hydrolyzes Ap4p to yield AMP and ATP. In Bacillus cereus (strain AH820), this protein is Bis(5'-nucleosyl)-tetraphosphatase PrpE [asymmetrical].